The chain runs to 547 residues: Chaperonin GroEL (547 aa).

Residues 30–33 (TLGP), Lys-51, 87–91 (DGTTT), Gly-415, 479–481 (NAA), and Asp-495 contribute to the ATP site.

The protein belongs to the chaperonin (HSP60) family. Forms a cylinder of 14 subunits composed of two heptameric rings stacked back-to-back. Interacts with the co-chaperonin GroES.

Its subcellular location is the cytoplasm. The enzyme catalyses ATP + H2O + a folded polypeptide = ADP + phosphate + an unfolded polypeptide.. Together with its co-chaperonin GroES, plays an essential role in assisting protein folding. The GroEL-GroES system forms a nano-cage that allows encapsulation of the non-native substrate proteins and provides a physical environment optimized to promote and accelerate protein folding. The polypeptide is Chaperonin GroEL (Pseudomonas paraeruginosa (strain DSM 24068 / PA7) (Pseudomonas aeruginosa (strain PA7))).